A 1818-amino-acid chain; its full sequence is Integrin beta-4 (1818 aa).

An N-terminal signal peptide occupies residues 1-28 (MAGPCCSPWVKLLLLAAMLSASLPGDLA). Residues 29–712 (NRCKKAQVKS…HKKKDCPPGS (684 aa)) are Extracellular-facing. The PSI domain occupies 30-74 (RCKKAQVKSCTECIRVDKSCAYCTDELFKERRCNTQAELLAAGCR). Cystine bridges form between cysteine 31-cysteine 49, cysteine 39-cysteine 457, cysteine 42-cysteine 62, cysteine 52-cysteine 73, cysteine 246-cysteine 289, cysteine 459-cysteine 478, cysteine 470-cysteine 481, and cysteine 483-cysteine 492. In terms of domain architecture, VWFA spans 132–310 (DLYILMDFSN…KTQDYPSVPT (179 aa)). Mg(2+) contacts are provided by serine 140 and serine 142. Residues serine 142, aspartate 145, aspartate 146, and aspartate 177 each contribute to the Ca(2+) site. The interval 195–200 (WPNSDP) is involved in NRG1- and IGF1-binding. Ca(2+) is bound by residues asparagine 229, aspartate 231, proline 233, and glutamate 234. Glutamate 234 contributes to the Mg(2+) binding site. An N-linked (GlcNAc...) asparagine glycan is attached at asparagine 328. Glutamate 351 is a Ca(2+) binding site. I-EGF domains follow at residues 459–493 (CELQKEVRSARCHFRGDFMCGHCVCNEGWSGKTCN), 494–539 (CSTG…HFCE), 540–576 (YDNFQCPRTSGFLCNDRGRCSMGECVCEPGWTGRSCD), and 577–617 (CPLS…TTCE). Positions 473–475 (RGD) match the Cell attachment site motif. An N-linked (GlcNAc...) asparagine glycan is attached at asparagine 493. Intrachain disulfides connect cysteine 494-cysteine 522, cysteine 505-cysteine 520, cysteine 514-cysteine 525, cysteine 527-cysteine 538, cysteine 545-cysteine 559, cysteine 553-cysteine 564, cysteine 566-cysteine 575, cysteine 577-cysteine 600, cysteine 584-cysteine 598, cysteine 592-cysteine 603, and cysteine 605-cysteine 616. Residue asparagine 581 is glycosylated (N-linked (GlcNAc...) asparagine). The N-linked (GlcNAc...) asparagine glycan is linked to asparagine 619. 4 disulfides stabilise this stretch: cysteine 628-cysteine 673, cysteine 634-cysteine 653, cysteine 637-cysteine 650, and cysteine 682-cysteine 708. An N-linked (GlcNAc...) asparagine glycan is attached at asparagine 697. The helical transmembrane segment at 713-733 (FWWLIPLLIFLLLLLALLLLL) threads the bilayer. Residues 734-751 (CWKYCACCKACLGLLPCC) are palmitoylated on several cysteines. Over 734-1818 (CWKYCACCKA…THMDQQFFQT (1085 aa)) the chain is Cytoplasmic. Serine 773 carries the phosphoserine modification. Positions 981-1086 (VNITIIKEQA…QVRRFQVQLS (106 aa)) constitute a Calx-beta domain. Residues 1005 to 1007 (RGD) carry the Cell attachment site motif. Phosphoserine is present on residues serine 1071 and serine 1121. The disordered stretch occupies residues 1115-1137 (INQTLSSPPPPHGDLGAPQNPNA). 2 consecutive Fibronectin type-III domains span residues 1131–1220 (APQN…THQE) and 1224–1323 (EPGR…TQPK). The interval 1402-1433 (LSASSGRSDEDGSVAGGVEGEGSGWIRGATPR) is disordered. Residues 1415-1426 (VAGGVEGEGSGW) are compositionally biased toward gly residues. Residues serine 1451, serine 1454, and serine 1470 each carry the phosphoserine modification. Threonine 1483 is subject to Phosphothreonine. Position 1490 is a phosphoserine (serine 1490). Threonine 1526 carries the phosphothreonine modification. 2 consecutive Fibronectin type-III domains span residues 1526 to 1621 (TPTR…VHPQ) and 1639 to 1735 (APGP…SQVG). Residue serine 1787 is modified to Phosphoserine.

The protein belongs to the integrin beta chain family. As to quaternary structure, heterodimer of an alpha and a beta subunit. Beta-4 associates with alpha-6. Interacts (via cytoplasmic region) with COL17A1 (via cytoplasmic region). Interacts (via cytoplasmic region) with DST isoform 3 (via N-terminus). Interacts (via cytoplasmic domain) with DST (via N-terminus). Interacts with RAC1. ITGA6:ITGB4 is found in a ternary complex with NRG1 and ERBB3. ITGA6:ITGB4 is found in a ternary complex with IGF1 and IGF1R. ITGA6:ITGB4 interacts with IGF2. Interacts with TMEM268; this interaction prevents ITGB4 degradation. Post-translationally, palmitoylated by DHHC3 at several cysteines of the membrane-proximal region, enhancing stability and cell surface expression. Palmitoylation also promotes secondary association with tertaspanins.

It localises to the cell membrane. Its subcellular location is the cell junction. It is found in the hemidesmosome. In terms of biological role, integrin alpha-6/beta-4 is a receptor for laminin. It plays a critical structural role in the hemidesmosome of epithelial cells. Is required for the regulation of keratinocyte polarity and motility. ITGA6:ITGB4 binds to NRG1 (via EGF domain) and this binding is essential for NRG1-ERBB signaling. ITGA6:ITGB4 binds to IGF1 and this binding is essential for IGF1 signaling. ITGA6:ITGB4 binds to IGF2 and this binding is essential for IGF2 signaling. The protein is Integrin beta-4 (Itgb4) of Mus musculus (Mouse).